A 301-amino-acid polypeptide reads, in one-letter code: Methionyl-tRNA formyltransferase (301 aa).

S110–P113 lines the (6S)-5,6,7,8-tetrahydrofolate pocket.

This sequence belongs to the Fmt family.

It catalyses the reaction L-methionyl-tRNA(fMet) + (6R)-10-formyltetrahydrofolate = N-formyl-L-methionyl-tRNA(fMet) + (6S)-5,6,7,8-tetrahydrofolate + H(+). In terms of biological role, attaches a formyl group to the free amino group of methionyl-tRNA(fMet). The formyl group appears to play a dual role in the initiator identity of N-formylmethionyl-tRNA by promoting its recognition by IF2 and preventing the misappropriation of this tRNA by the elongation apparatus. In Acidiphilium cryptum (strain JF-5), this protein is Methionyl-tRNA formyltransferase.